We begin with the raw amino-acid sequence, 199 residues long: ParB-like protein Saci_1498 (199 aa).

Belongs to the ParB family.

Functionally, probably part of a 4-gene DNA damage response locus in which the upstream ups system, in combination with this downstream locus, functions in homologous recombination to rescue Sulfolobales from DNA-damaging threats. This protein might function in the DNA transfer machinery. The protein is ParB-like protein Saci_1498 of Sulfolobus acidocaldarius (strain ATCC 33909 / DSM 639 / JCM 8929 / NBRC 15157 / NCIMB 11770).